The sequence spans 201 residues: Small ribosomal subunit protein uS4c (201 aa).

The disordered stretch occupies residues 17-44 (ALPGLTNKKPRNGSDLRNQSRSGKKSQY). Positions 89–149 (MRLDNILFRL…DEQKSRALIQ (61 aa)) constitute an S4 RNA-binding domain.

Belongs to the universal ribosomal protein uS4 family. As to quaternary structure, part of the 30S ribosomal subunit. Contacts protein S5. The interaction surface between S4 and S5 is involved in control of translational fidelity.

It is found in the plastid. It localises to the chloroplast. One of the primary rRNA binding proteins, it binds directly to 16S rRNA where it nucleates assembly of the body of the 30S subunit. In terms of biological role, with S5 and S12 plays an important role in translational accuracy. The protein is Small ribosomal subunit protein uS4c (rps4) of Nicotiana sylvestris (Wood tobacco).